A 550-amino-acid chain; its full sequence is DNA-directed RNA polymerase subunit alpha (550 aa).

The tract at residues 1-333 (MTIYPNLKKI…QENNLFRSEK (333 aa)) is alpha N-terminal domain (alpha-NTD). The insert stretch occupies residues 185-258 (TTLKKRNILL…TSLGHDTVSN (74 aa)). An alpha C-terminal domain (alpha-CTD) region spans residues 378–550 (FLNQSLGQNK…SLTFEYARKF (173 aa)).

Belongs to the RNA polymerase alpha chain family. As to quaternary structure, in plastids the minimal PEP RNA polymerase catalytic core is composed of four subunits: alpha, beta, beta', and beta''. When a (nuclear-encoded) sigma factor is associated with the core the holoenzyme is formed, which can initiate transcription.

It is found in the plastid. Its subcellular location is the chloroplast. The catalysed reaction is RNA(n) + a ribonucleoside 5'-triphosphate = RNA(n+1) + diphosphate. Its function is as follows. DNA-dependent RNA polymerase catalyzes the transcription of DNA into RNA using the four ribonucleoside triphosphates as substrates. The sequence is that of DNA-directed RNA polymerase subunit alpha (rpoA) from Chlamydomonas reinhardtii (Chlamydomonas smithii).